A 119-amino-acid polypeptide reads, in one-letter code: Toxin ICK-8 (119 aa).

The signal sequence occupies residues 1–19 (MMKLYSLVIIATLAAAAFA). 4 disulfides stabilise this stretch: Cys-59–Cys-74, Cys-67–Cys-80, Cys-71–Cys-116, and Cys-73–Cys-87.

Belongs to the neurotoxin 25 family. ICK-8 subfamily. In terms of tissue distribution, expressed by the venom gland.

The protein resides in the secreted. Its function is as follows. Ion channel inhibitor. The chain is Toxin ICK-8 from Trittame loki (Brush-footed trapdoor spider).